Reading from the N-terminus, the 971-residue chain is Dynamin-like GTPase OPA1, mitochondrial (971 aa).

Residues methionine 1–serine 89 constitute a mitochondrion transit peptide. Topologically, residues phenylalanine 90–arginine 98 are mitochondrial matrix. The helical transmembrane segment at leucine 99–tyrosine 115 threads the bilayer. Topologically, residues threonine 116–aspartate 781 are mitochondrial intermembrane. Residues glutamate 204–lysine 224 are disordered. A compositionally biased stretch (basic and acidic residues) spans alanine 213 to lysine 224. A coiled-coil region spans residues lysine 219 to lysine 265. Residues glutamine 297–glutamate 572 enclose the Dynamin-type G domain. Positions glycine 307 to threonine 314 are G1 motif. Residues serine 310, glycine 312, lysine 313, threonine 314, serine 315, and glycine 329 each contribute to the GTP site. Threonine 314 lines the Mg(2+) pocket. The segment at methionine 333 to arginine 336 is G2 motif. The Mg(2+) site is built by threonine 335 and aspartate 410. Residues aspartate 410–glycine 413 form a G3 motif region. A G4 motif region spans residues threonine 478–aspartate 481. GTP-binding residues include lysine 479, aspartate 481, and threonine 514. The tract at residues valine 512–glycine 515 is G5 motif. Stalk region stretches follow at residues aspartate 600–threonine 847 and cysteine 885–isoleucine 939. Residues threonine 747 to cysteine 867 form a paddle region region. An intramembrane segment occupies tryptophan 782–arginine 792. Over serine 793–lysine 971 the chain is Mitochondrial intermembrane. Cysteine 867 and cysteine 885 are joined by a disulfide. A coiled-coil region spans residues arginine 906 to lysine 971.

Belongs to the TRAFAC class dynamin-like GTPase superfamily. Dynamin/Fzo/YdjA family. In terms of assembly, oligomeric complex consisting of membrane-bound and soluble forms of OPA1. Post-translationally, cleaved by OMA1 or YME1L downstream of the transmembrane region in response to different signals to generate soluble forms. Cleaved by OMA1 at position S1 following stress conditions, generating the short soluble form (Dynamin-like GTPase OPA1, short form; S-OPA1). In terms of tissue distribution, strongly expressed in the brain, ovary and skeletal muscle. In the brain, expression of the mRNA was observed specifically in motor neurons, in nucleus oculomotorius, in nucleus valvulae lateralis, in the medulla oblongata and in the spinal cord.

It localises to the mitochondrion inner membrane. The protein localises to the mitochondrion intermembrane space. The enzyme catalyses GTP + H2O = GDP + phosphate + H(+). Functionally, dynamin-related GTPase that is essential for normal mitochondrial morphology by mediating fusion of the mitochondrial inner membranes, regulating cristae morphology and maintaining respiratory chain function. Exists in two forms: the transmembrane, long form (Dynamin-like GTPase OPA1, long form; L-OPA1), which is tethered to the inner mitochondrial membrane, and the short soluble form (Dynamin-like GTPase OPA1, short form; S-OPA1), which results from proteolytic cleavage and localizes in the intermembrane space. Both forms (L-OPA1 and S-OPA1) cooperate to catalyze the fusion of the mitochondrial inner membrane. The equilibrium between L-OPA1 and S-OPA1 is essential: excess levels of S-OPA1, produced by cleavage by OMA1 following loss of mitochondrial membrane potential, lead to an impaired equilibrium between L-OPA1 and S-OPA1, inhibiting mitochondrial fusion. The balance between L-OPA1 and S-OPA1 also influences cristae shape and morphology. Its role in mitochondrial morphology is required for mitochondrial genome maintenance. Its function is as follows. Constitutes the transmembrane long form (L-OPA1) that plays a central role in mitochondrial inner membrane fusion and cristae morphology. L-OPA1 and the soluble short form (S-OPA1) form higher-order helical assemblies that coordinate the fusion of mitochondrial inner membranes. Inner membrane-anchored L-OPA1 molecules initiate membrane remodeling by recruiting soluble S-OPA1 to rapidly polymerize into a flexible cylindrical scaffold encaging the mitochondrial inner membrane. Once at the membrane surface, the formation of S-OPA1 helices induce bilayer curvature. OPA1 dimerization through the paddle region, which inserts into cardiolipin-containing membrane, promotes GTP hydrolysis and the helical assembly of a flexible OPA1 lattice on the membrane, which drives membrane curvature and mitochondrial fusion. Plays a role in the maintenance and remodeling of mitochondrial cristae, some invaginations of the mitochondrial inner membrane that provide an increase in the surface area. Probably acts by forming helical filaments at the inside of inner membrane tubes with the shape and dimensions of crista junctions. Constitutes the soluble short form (S-OPA1) generated by cleavage by OMA1, which plays a central role in mitochondrial inner membrane fusion and cristae morphology. The transmembrane long form (L-OPA1) and the S-OPA1 form higher-order helical assemblies that coordinate the fusion of mitochondrial inner membranes. Inner membrane-anchored L-OPA1 molecules initiate membrane remodeling by recruiting soluble S-OPA1 to rapidly polymerize into a flexible cylindrical scaffold encaging the mitochondrial inner membrane. Once at the membrane surface, the formation of S-OPA1 helices induce bilayer curvature. OPA1 dimerization through the paddle region, which inserts into cardiolipin-containing membrane, promotes GTP hydrolysis and the helical assembly of a flexible OPA1 lattice on the membrane, which drives membrane curvature and mitochondrial fusion. Excess levels of S-OPA1 produced by cleavage by OMA1 following stress conditions that induce loss of mitochondrial membrane potential, lead to an impaired equilibrium between L-OPA1 and S-OPA1, thereby inhibiting mitochondrial fusion. Plays a role in the maintenance and remodeling of mitochondrial cristae, some invaginations of the mitochondrial inner membrane that provide an increase in the surface area. Probably acts by forming helical filaments at the inside of inner membrane tubes with the shape and dimensions of crista junctions. The protein is Dynamin-like GTPase OPA1, mitochondrial (opa1) of Oncorhynchus masou (Cherry salmon).